The sequence spans 258 residues: Glutathione S-transferase DHAR3, chloroplastic (258 aa).

The transit peptide at 1–42 (MISLRFQPSTTAGVLSASVSRAGFIKRCGSTKPGRVGRFVTM) directs the protein to the chloroplast. Cys52 bears the S-glutathionyl cysteine mark. Lys54 and Asp65 together coordinate glutathione. Residues Lys54 and Asp65 each coordinate L-ascorbate. Residues 56–129 (SITTPNKLGD…DVITQALEEK (74 aa)) enclose the GST N-terminal domain. Cys66 serves as the catalytic Nucleophile. A disulfide bridge connects residues Cys66 and Cys69. The Glutathione-binding motif lies at 66–71 (CPFCQK). Residues Lys93, Val106, Ser119, His205, and Trp252 each coordinate glutathione. Residues 130-258 (YPEPPLATPP…IAGWRPKVMG (129 aa)) enclose the GST C-terminal domain. Lys255 provides a ligand contact to L-ascorbate.

The protein belongs to the GST superfamily. DHAR family. Monomer. Interacts with TRX3. Partial S-glutathionylation and intramolecular disulfide bond formation between Cys-66 and Cys-69 in the presence of oxidized glutathione (GSSG). Could be reduced by TRX-dependent process.

Its subcellular location is the plastid. The protein resides in the chloroplast stroma. It carries out the reaction RX + glutathione = an S-substituted glutathione + a halide anion + H(+). It catalyses the reaction L-dehydroascorbate + 2 glutathione = glutathione disulfide + L-ascorbate. Its function is as follows. Displays a dual function. As a soluble protein, exhibits glutathione-dependent thiol transferase and dehydroascorbate (DHA) reductase activities. Key component of the ascorbate recycling system. Involved in the redox homeostasis, especially in scavenging of ROS under oxidative stresses. This is Glutathione S-transferase DHAR3, chloroplastic (DHAR3) from Arabidopsis thaliana (Mouse-ear cress).